The primary structure comprises 624 residues: Bifunctional 3'-phosphoadenosine 5'-phosphosulfate synthase 1 (624 aa).

An N-acetylmethionine modification is found at Met1. The adenylyl-sulfate kinase stretch occupies residues 1-225 (MEIPGSLCKK…VVELLQERDI (225 aa)). Lys12 bears the N6-acetyllysine mark. 62–67 (GAGKTT) lines the ATP pocket. Adenosine 5'-phosphosulfate is bound by residues 89 to 92 (DNIR), Phe101, 106 to 109 (REEN), 132 to 133 (IS), Lys171, and 184 to 185 (GF). ATP-binding positions include Cys207, Cys212, 419–422 (QLRN), 521–525 (GRDPA), and Ala563. The sulfate adenylyltransferase stretch occupies residues 234–624 (VKELYVPENK…VEYYKSLEKA (391 aa)).

This sequence in the N-terminal section; belongs to the APS kinase family. The protein in the C-terminal section; belongs to the sulfate adenylyltransferase family. Homodimer. As to expression, expressed in the neonatal brain and in cartilage.

It catalyses the reaction sulfate + ATP + H(+) = adenosine 5'-phosphosulfate + diphosphate. The enzyme catalyses adenosine 5'-phosphosulfate + ATP = 3'-phosphoadenylyl sulfate + ADP + H(+). The protein operates within sulfur metabolism; sulfate assimilation. Functionally, bifunctional enzyme with both ATP sulfurylase and APS kinase activity, which mediates two steps in the sulfate activation pathway. The first step is the transfer of a sulfate group to ATP to yield adenosine 5'-phosphosulfate (APS), and the second step is the transfer of a phosphate group from ATP to APS yielding 3'-phosphoadenylylsulfate (PAPS: activated sulfate donor used by sulfotransferase). In mammals, PAPS is the sole source of sulfate; APS appears to be only an intermediate in the sulfate-activation pathway. Required for normal biosynthesis of sulfated L-selectin ligands in endothelial cells. This chain is Bifunctional 3'-phosphoadenosine 5'-phosphosulfate synthase 1 (Papss1), found in Mus musculus (Mouse).